Here is a 313-residue protein sequence, read N- to C-terminus: MTRLSILLLLISLVYSTPYPQTQISKKIGDDATLSCSRNNINDYVVMSAWYKEPNSIILLAAKSDVLYFDNYTKDKISYDSPYDDLVTTITIKSLTAKDAGTYVCAFFMTSTTNDTDKVDYEEYSTELIVNTDSESTIDIILSGSSHSPETSSEKPDYINNFNCSLVFEIATPGPITDNVENHTDTVTYTSDIINTVSTSSRESTTVKTSGPITNKEDHTVTDTVSYTTVSTSSEIVTTKSTANDAHNDNEPSTVSPTTVKNITKSIGKYSTKDYVKVFGIAALIILSAVAIFCITYYICNKRSRKYKTENKV.

The signal sequence occupies residues 1–16 (MTRLSILLLLISLVYS). At 17 to 277 (TPYPQTQISK…GKYSTKDYVK (261 aa)) the chain is on the virion surface side. An Ig-like V-type domain is found at 18-121 (PYPQTQISKK…TTNDTDKVDY (104 aa)). A disulfide bridge links Cys36 with Cys105. Residues Asn71, Asn114, Asn163, Asn182, and Asn262 are each glycosylated (N-linked (GlcNAc...) asparagine; by host). Residues 278–301 (VFGIAALIILSAVAIFCITYYICN) form a helical membrane-spanning segment. Residues 302–313 (KRSRKYKTENKV) lie on the Intravirion side of the membrane.

Belongs to the orthopoxvirus OPG185 family. In terms of assembly, heterodimerizes with OPG040. The heterodimer OPG185-OPG040 interacts with components of the entry fusion complex OPG143 and OPG094. Heterodimer with C3/VPC protein; disulfide-linked. Post-translationally, glycosylated; contains phosphate and sulfate-substituted glycans. O-glycosylation is required for hemagglutination and hemadsorption activities of infected cell membranes.

It localises to the virion membrane. Its subcellular location is the host membrane. Prevents cell to cell fusion by interacting with and directing the viral OPG040 protein on the host plasma membrane. The OPG185-OPG040 complex associates with components of the entry fusion complex (EFC) presumably to avoid superinfection and syncytium formation. Via its interaction with C3/VCP protein, protects the infected cell and probably also the extracellular enveloped virus from complement attack. This Homo sapiens (Human) protein is Protein OPG185 (OPG185).